Reading from the N-terminus, the 572-residue chain is mRNA cap guanine-N(7) methyltransferase (572 aa).

2 disordered regions span residues 1–75 (MPED…GSRV) and 110–140 (EKAI…FPSS). 2 stretches are compositionally biased toward basic and acidic residues: residues 24–39 (ANDG…RVHD) and 59–69 (SADENKDKKYD). The span at 123-140 (TTTTPSSTTSSSSSFPSS) shows a compositional bias: low complexity. One can recognise an mRNA cap 0 methyltransferase domain in the interval 262–571 (SPIYKLRNFN…FYVAFVFEKV (310 aa)). 271–272 (NN) serves as a coordination point for mRNA. Residues K275, C302, D324, D366, Q396, and Y401 each coordinate S-adenosyl-L-methionine.

Belongs to the class I-like SAM-binding methyltransferase superfamily. mRNA cap 0 methyltransferase family.

The protein resides in the nucleus. It catalyses the reaction a 5'-end (5'-triphosphoguanosine)-ribonucleoside in mRNA + S-adenosyl-L-methionine = a 5'-end (N(7)-methyl 5'-triphosphoguanosine)-ribonucleoside in mRNA + S-adenosyl-L-homocysteine. In terms of biological role, responsible for methylating the 5'-cap structure of mRNAs. This Lodderomyces elongisporus (strain ATCC 11503 / CBS 2605 / JCM 1781 / NBRC 1676 / NRRL YB-4239) (Yeast) protein is mRNA cap guanine-N(7) methyltransferase (ABD1).